A 74-amino-acid polypeptide reads, in one-letter code: uncharacterized protein (74 aa).

It localises to the mitochondrion. This is an uncharacterized protein from Marchantia polymorpha (Common liverwort).